We begin with the raw amino-acid sequence, 118 residues long: Group 1 truncated hemoglobin GlbN (118 aa).

Position 70 (histidine 70) interacts with heme.

It belongs to the truncated hemoglobin family. Group I subfamily. In terms of assembly, monomer. The cofactor is heme.

It localises to the membrane. This chain is Group 1 truncated hemoglobin GlbN (glbN), found in Nostoc commune.